The sequence spans 331 residues: Tyrosine--tRNA ligase (331 aa).

Y31, Y155, Q159, D162, and Q177 together coordinate L-tyrosine. A 'KMSKS' region motif is present at residues 218–222 (KMSKS). ATP is bound at residue K221.

This sequence belongs to the class-I aminoacyl-tRNA synthetase family. TyrS type 4 subfamily. As to quaternary structure, homodimer.

The protein resides in the cytoplasm. The catalysed reaction is tRNA(Tyr) + L-tyrosine + ATP = L-tyrosyl-tRNA(Tyr) + AMP + diphosphate + H(+). In terms of biological role, catalyzes the attachment of tyrosine to tRNA(Tyr) in a two-step reaction: tyrosine is first activated by ATP to form Tyr-AMP and then transferred to the acceptor end of tRNA(Tyr). The protein is Tyrosine--tRNA ligase of Thermoplasma volcanium (strain ATCC 51530 / DSM 4299 / JCM 9571 / NBRC 15438 / GSS1).